We begin with the raw amino-acid sequence, 813 residues long: DNA ligase (813 aa).

NAD(+)-binding positions include 41 to 45 (DAEYD), 90 to 91 (SI), and E127. The N6-AMP-lysine intermediate role is filled by K129. Positions 150, 189, 307, and 331 each coordinate NAD(+). C440, C443, C458, and C464 together coordinate Zn(2+). The 85-residue stretch at 729–813 (AEEGALSGKT…LLQNPPGDSA (85 aa)) folds into the BRCT domain.

It belongs to the NAD-dependent DNA ligase family. LigA subfamily. The cofactor is Mg(2+). Requires Mn(2+) as cofactor.

It carries out the reaction NAD(+) + (deoxyribonucleotide)n-3'-hydroxyl + 5'-phospho-(deoxyribonucleotide)m = (deoxyribonucleotide)n+m + AMP + beta-nicotinamide D-nucleotide.. Its function is as follows. DNA ligase that catalyzes the formation of phosphodiester linkages between 5'-phosphoryl and 3'-hydroxyl groups in double-stranded DNA using NAD as a coenzyme and as the energy source for the reaction. It is essential for DNA replication and repair of damaged DNA. This is DNA ligase from Ralstonia nicotianae (strain ATCC BAA-1114 / GMI1000) (Ralstonia solanacearum).